Consider the following 266-residue polypeptide: Ubiquinone biosynthesis protein COQ4 homolog, mitochondrial (266 aa).

4 residues coordinate Zn(2+): H169, D170, H173, and E185.

This sequence belongs to the COQ4 family. As to quaternary structure, component of a multi-subunit COQ enzyme complex. Zn(2+) serves as cofactor.

The protein localises to the mitochondrion inner membrane. The enzyme catalyses a 4-hydroxy-3-methoxy-5-(all-trans-polyprenyl)benzoate + H(+) = a 2-methoxy-6-(all-trans-polyprenyl)phenol + CO2. It participates in cofactor biosynthesis; ubiquinone biosynthesis. Its function is as follows. Lyase that catalyzes the C1-decarboxylation of 4-hydroxy-3-methoxy-5-(all-trans-polyprenyl)benzoic acid into 2-methoxy-6-(all-trans-polyprenyl)phenol during ubiquinone biosynthesis. The polypeptide is Ubiquinone biosynthesis protein COQ4 homolog, mitochondrial (Drosophila ananassae (Fruit fly)).